We begin with the raw amino-acid sequence, 440 residues long: L-seryl-tRNA(Sec) selenium transferase (440 aa).

Lys-282 bears the N6-(pyridoxal phosphate)lysine mark.

Belongs to the SelA family. Pyridoxal 5'-phosphate is required as a cofactor.

The protein resides in the cytoplasm. It catalyses the reaction L-seryl-tRNA(Sec) + selenophosphate + H(+) = L-selenocysteinyl-tRNA(Sec) + phosphate. It functions in the pathway aminoacyl-tRNA biosynthesis; selenocysteinyl-tRNA(Sec) biosynthesis; selenocysteinyl-tRNA(Sec) from L-seryl-tRNA(Sec) (bacterial route): step 1/1. Converts seryl-tRNA(Sec) to selenocysteinyl-tRNA(Sec) required for selenoprotein biosynthesis. In Campylobacter jejuni subsp. doylei (strain ATCC BAA-1458 / RM4099 / 269.97), this protein is L-seryl-tRNA(Sec) selenium transferase.